The following is a 100-amino-acid chain: Trp operon repressor homolog (100 aa).

The DNA-binding element occupies 59-82 (QRQISQMLGVGIATITRGSNELKS). Residues 78–93 (NELKSKSDTDKDKLKT) show a composition bias toward basic and acidic residues. The disordered stretch occupies residues 78–100 (NELKSKSDTDKDKLKTLLEQGAQ).

The protein belongs to the TrpR family. As to quaternary structure, homodimer.

The protein resides in the cytoplasm. Its function is as follows. This protein is an aporepressor. When complexed with L-tryptophan it binds the operator region of the trp operon and prevents the initiation of transcription. In Vibrio campbellii (strain ATCC BAA-1116), this protein is Trp operon repressor homolog.